A 324-amino-acid polypeptide reads, in one-letter code: DNA repair and recombination protein RadA (324 aa).

G107–S114 contacts ATP.

Belongs to the eukaryotic RecA-like protein family.

Involved in DNA repair and in homologous recombination. Binds and assemble on single-stranded DNA to form a nucleoprotein filament. Hydrolyzes ATP in a ssDNA-dependent manner and promotes DNA strand exchange between homologous DNA molecules. The sequence is that of DNA repair and recombination protein RadA from Methanoculleus marisnigri (strain ATCC 35101 / DSM 1498 / JR1).